The primary structure comprises 112 residues: Dolichyl-diphosphooligosaccharide--protein glycosyltransferase subunit DAD1 (112 aa).

Over 1–27 the chain is Cytoplasmic; it reads MVELSSVISKFYNDYVQNTPKKLKLVD. Residues 28-48 traverse the membrane as a helical segment; that stretch reads IYLGYILLTGIIQFVYCCLVG. Topologically, residues 49-51 are lumenal; it reads TFP. The chain crosses the membrane as a helical span at residues 52–72; that stretch reads FNSFLSGFISTVSCFVLAVCL. At 73–91 the chain is on the cytoplasmic side; the sequence is RLQANPQNKSVFAGISPER. A helical membrane pass occupies residues 92 to 112; sequence GFADFIFAHVILHLVVMNFIG.

It belongs to the DAD/OST2 family. Component of the oligosaccharyltransferase (OST) complex.

It is found in the endoplasmic reticulum membrane. Its pathway is protein modification; protein glycosylation. Functionally, subunit of the oligosaccharyl transferase (OST) complex that catalyzes the initial transfer of a defined glycan (Glc(3)Man(9)GlcNAc(2) in eukaryotes) from the lipid carrier dolichol-pyrophosphate to an asparagine residue within an Asn-X-Ser/Thr consensus motif in nascent polypeptide chains, the first step in protein N-glycosylation. N-glycosylation occurs cotranslationally and the complex associates with the Sec61 complex at the channel-forming translocon complex that mediates protein translocation across the endoplasmic reticulum (ER). All subunits are required for a maximal enzyme activity. Probably as part of the N-glycosylation pathway, plays a role in the regulation of tissue growth and apoptosis. In Drosophila melanogaster (Fruit fly), this protein is Dolichyl-diphosphooligosaccharide--protein glycosyltransferase subunit DAD1.